The following is a 594-amino-acid chain: UvrABC system protein C (594 aa).

The region spanning 14–91 is the GIY-YIG domain; sequence DQPGCYLMKD…IKKYDPKYNI (78 aa). One can recognise a UVR domain in the interval 196–231; it reads KEVRSELEIKMYEASEKLEFERAKELRDQIAHIDAI.

It belongs to the UvrC family. In terms of assembly, interacts with UvrB in an incision complex.

Its subcellular location is the cytoplasm. Its function is as follows. The UvrABC repair system catalyzes the recognition and processing of DNA lesions. UvrC both incises the 5' and 3' sides of the lesion. The N-terminal half is responsible for the 3' incision and the C-terminal half is responsible for the 5' incision. The chain is UvrABC system protein C from Bacillus cereus (strain B4264).